Consider the following 415-residue polypeptide: Phosphoglycerate kinase (415 aa).

The (2R)-3-phosphoglycerate site is built by V23, D24, F25, N26, Q39, R40, S63, H64, G66, R67, L122, R123, and R170. ADP is bound at residue G213. G213 lines the CDP pocket. Positions 214 and 215 each coordinate AMP. A214 is a binding site for ATP. A214 is a Mg(2+) binding site. D218 provides a ligand contact to CDP. Position 218 (D218) interacts with Mg(2+). AMP is bound at residue K219. ATP is bound at residue K219. Position 237 (G237) interacts with ADP. G237 is a CDP binding site. G238 and G311 together coordinate AMP. 2 residues coordinate ATP: G238 and G311. Positions 336 and 341 each coordinate CDP. An ADP-binding site is contributed by F341. AMP is bound at residue E342. E342, D373, and T374 together coordinate ATP. D373 is a Mg(2+) binding site.

It belongs to the phosphoglycerate kinase family. In terms of assembly, monomer. The cofactor is Mg(2+).

The protein resides in the cytoplasm. It localises to the mitochondrion. The catalysed reaction is (2R)-3-phosphoglycerate + ATP = (2R)-3-phospho-glyceroyl phosphate + ADP. It functions in the pathway carbohydrate degradation; glycolysis; pyruvate from D-glyceraldehyde 3-phosphate: step 2/5. Functionally, catalyzes one of the two ATP producing reactions in the glycolytic pathway via the reversible conversion of 1,3-diphosphoglycerate to 3-phosphoglycerate. Both L- and D- forms of purine and pyrimidine nucleotides can be used as substrates, but the activity is much lower on pyrimidines. Negatively regulates the biosynthesis of acetyl-CoA from pyruvate in the mitochondrion. The protein is Phosphoglycerate kinase (PGKA) of Penicillium chrysogenum (Penicillium notatum).